We begin with the raw amino-acid sequence, 122 residues long: MKLTREEKRIKRHRRIRKKISGTASRPRLCMYRSLNAFYASLVDDITGNAILTVSSLGKEYVDATGKRGGKSIEAVQKVAEILVQKAKEKGIDKAVFDRSGYLYHGKVKAFAEKCRELGLIN.

Belongs to the universal ribosomal protein uL18 family. In terms of assembly, part of the 50S ribosomal subunit; part of the 5S rRNA/L5/L18/L25 subcomplex. Contacts the 5S and 23S rRNAs.

Its function is as follows. This is one of the proteins that bind and probably mediate the attachment of the 5S RNA into the large ribosomal subunit, where it forms part of the central protuberance. This chain is Large ribosomal subunit protein uL18, found in Hydrogenobaculum sp. (strain Y04AAS1).